Here is a 1159-residue protein sequence, read N- to C-terminus: Caspase recruitment domain-containing protein 11 (1159 aa).

A CARD domain is found at 18–110 (EEEALWDNVE…ELYKLVTGKE (93 aa)). The segment at 111–128 (PTRRFSTIVVEEGHEGLT) is linker. A coiled-coil region spans residues 176 to 449 (FQERYYKMKE…KDNGSLDQSL (274 aa)). The segment at 441-496 (DNGSLDQSLPRHLPATIISQNLGDTSPRTNGQEADDSSTSEESPEDSKYFLPYHPP) is disordered. S448 and S466 each carry phosphoserine. The tract at residues 450 to 671 (PRHLPATIIS…GHVRGTGPLV (222 aa)) is inhibitory domain (ID). The segment covering 457–472 (IISQNLGDTSPRTNGQ) has biased composition (polar residues). The segment covering 473–484 (EADDSSTSEESP) has biased composition (acidic residues). Residues S512 and S540 each carry the phosphoserine modification. A disordered region spans residues 532–578 (HEEDFTDGSPSSSRSLPVTSSFSKMQPHRSRSSIMSITAEPPGNDSI). Residues 540 to 554 (SPSSSRSLPVTSSFS) show a composition bias toward low complexity. At S564 the chain carries Phosphoserine; by PKC/PRKCB and PKC/PRKCQ. Position 598 is a phosphoserine (S598). A disordered region spans residues 610-631 (NHERYSFGPPSIHSSSSSHQSE). A compositionally biased stretch (low complexity) spans 620-630 (SIHSSSSSHQS). A phosphoserine; by PKC/PRKCB and PKC/PRKCQ mark is found at S649 and S657. The region spanning 672-760 (QHTTLNGDGL…LITLHYKVNH (89 aa)) is the PDZ domain. Residues S891 and S930 each carry the phosphoserine modification. The region spanning 978-1145 (RRRPVLFTPT…LLRVLKDKIV (168 aa)) is the Guanylate kinase-like domain.

In terms of assembly, homodimer; disulfide-linked. Homomultimer; polymerizes following activation, forming a nucleating helical template that seeds BCL10-filament formation via a CARD-CARD interaction. Interacts (via CARD domain) with BCL10 (via CARD domain); interaction takes place following CARD11 activation and polymerization, leading to the formation of a filamentous CBM complex assembly. Component of a CBM complex (CARD11-BCL10-MALT1) complex involved in NF-kappa-B activation. Found in a membrane raft complex, at least composed of BCL10, CARD11, DPP4 and IKBKB. Interacts (via PDZ domain) with DPP4 (via cytoplasmic tail). In terms of processing, phosphorylation at Ser-564, Ser-649 and Ser-657 by PRKCB and PRKCQ leads to a shift from an inactive to an active form that activates the NF-kappa-B signaling.

It is found in the cytoplasm. It localises to the membrane raft. Its activity is regulated as follows. Maintained in an autoinhibited state via homodimerization in which the CARD domain forms an extensive interaction with the adjacent linker and coiled-coil regions. Activation downstream of T-cell receptor (TCR) by phosphorylation by PRKCB and PRKCQ triggers CARD11 homooligomerization and BCL10 recruitment, followed by activation of NF-kappa-B. Functionally, adapter protein that plays a key role in adaptive immune response by transducing the activation of NF-kappa-B downstream of T-cell receptor (TCR) and B-cell receptor (BCR) engagement. Transduces signals downstream TCR or BCR activation via the formation of a multiprotein complex together with BCL10 and MALT1 that induces NF-kappa-B and MAP kinase p38 (MAPK11, MAPK12, MAPK13 and/or MAPK14) pathways. Upon activation in response to TCR or BCR triggering, CARD11 homooligomerizes to form a nucleating helical template that recruits BCL10 via CARD-CARD interaction, thereby promoting polymerization of BCL10 and subsequent recruitment of MALT1: this leads to I-kappa-B kinase (IKK) phosphorylation and degradation, and release of NF-kappa-B proteins for nuclear translocation. Its binding to DPP4 induces T-cell proliferation and NF-kappa-B activation in a T-cell receptor/CD3-dependent manner. Promotes linear ubiquitination of BCL10 by promoting the targeting of BCL10 to RNF31/HOIP. Stimulates the phosphorylation of BCL10. Also activates the TORC1 signaling pathway. The sequence is that of Caspase recruitment domain-containing protein 11 from Mus musculus (Mouse).